Consider the following 105-residue polypeptide: MMLKPSIDTLLDKVPSKYSLVILQAKRAHELEAGATPTQEFKSVKSTLQALEEIESGNVVIHPDPSAKREAVRAKIEAERLAKEEEERKIKEQIAKEKEEEGEKI.

The protein belongs to the RNA polymerase subunit omega family. In terms of assembly, the RNAP catalytic core consists of 2 alpha, 1 beta, 1 beta' and 1 omega subunit. When a sigma factor is associated with the core the holoenzyme is formed, which can initiate transcription.

The catalysed reaction is RNA(n) + a ribonucleoside 5'-triphosphate = RNA(n+1) + diphosphate. Functionally, promotes RNA polymerase assembly. Latches the N- and C-terminal regions of the beta' subunit thereby facilitating its interaction with the beta and alpha subunits. This chain is DNA-directed RNA polymerase subunit omega, found in Streptococcus pyogenes serotype M12 (strain MGAS2096).